We begin with the raw amino-acid sequence, 155 residues long: Large ribosomal subunit protein uL22 (155 aa).

The protein belongs to the universal ribosomal protein uL22 family. As to quaternary structure, part of the 50S ribosomal subunit.

In terms of biological role, this protein binds specifically to 23S rRNA. It makes multiple contacts with different domains of the 23S rRNA in the assembled 50S subunit and ribosome. Functionally, the globular domain of the protein is located near the polypeptide exit tunnel on the outside of the subunit, while an extended beta-hairpin is found that lines the wall of the exit tunnel in the center of the 70S ribosome. The protein is Large ribosomal subunit protein uL22 of Pyrococcus abyssi (strain GE5 / Orsay).